Reading from the N-terminus, the 184-residue chain is Endoribonuclease YbeY (184 aa).

Residues His-118, His-122, and His-128 each contribute to the Zn(2+) site.

Belongs to the endoribonuclease YbeY family. The cofactor is Zn(2+).

The protein resides in the cytoplasm. Functionally, single strand-specific metallo-endoribonuclease involved in late-stage 70S ribosome quality control and in maturation of the 3' terminus of the 16S rRNA. The protein is Endoribonuclease YbeY of Nocardia farcinica (strain IFM 10152).